The following is a 464-amino-acid chain: UDP-N-acetylmuramate--L-alanine ligase (464 aa).

115–121 (GSHGKTT) is a binding site for ATP.

Belongs to the MurCDEF family.

It localises to the cytoplasm. It catalyses the reaction UDP-N-acetyl-alpha-D-muramate + L-alanine + ATP = UDP-N-acetyl-alpha-D-muramoyl-L-alanine + ADP + phosphate + H(+). Its pathway is cell wall biogenesis; peptidoglycan biosynthesis. In terms of biological role, cell wall formation. The protein is UDP-N-acetylmuramate--L-alanine ligase of Pelagibacter ubique (strain HTCC1062).